The following is a 668-amino-acid chain: Potassium-transporting ATPase ATP-binding subunit (668 aa).

A run of 4 helical transmembrane segments spans residues 31–51, 62–82, 213–233, and 243–263; these read MFLT…PSFF, FYVA…ISTA, TVFL…IFAI, and IVML…ALLP. Catalysis depends on D298, which acts as the 4-aspartylphosphate intermediate. Residues D335, E339, 367–374, and K385 contribute to the ATP site; that span reads FSSETKFS. The Mg(2+) site is built by D504 and D508. The next 3 membrane-spanning stretches (helical) occupy residues 573-593, 599-619, and 644-664; these read YFVI…VNIL, IVAV…LIPL, and IGGV…LIAW.

Belongs to the cation transport ATPase (P-type) (TC 3.A.3) family. Type IA subfamily. The system is composed of three essential subunits: KdpA, KdpB and KdpC.

It is found in the cell membrane. It catalyses the reaction K(+)(out) + ATP + H2O = K(+)(in) + ADP + phosphate + H(+). In terms of biological role, part of the high-affinity ATP-driven potassium transport (or Kdp) system, which catalyzes the hydrolysis of ATP coupled with the electrogenic transport of potassium into the cytoplasm. This subunit is responsible for energy coupling to the transport system and for the release of the potassium ions to the cytoplasm. In Thermoplasma volcanium (strain ATCC 51530 / DSM 4299 / JCM 9571 / NBRC 15438 / GSS1), this protein is Potassium-transporting ATPase ATP-binding subunit.